The primary structure comprises 366 residues: DNA replication and repair protein RecF (366 aa).

30–37 (GRNAQGKT) contributes to the ATP binding site.

The protein belongs to the RecF family.

The protein resides in the cytoplasm. Its function is as follows. The RecF protein is involved in DNA metabolism; it is required for DNA replication and normal SOS inducibility. RecF binds preferentially to single-stranded, linear DNA. It also seems to bind ATP. This chain is DNA replication and repair protein RecF, found in Streptococcus thermophilus (strain ATCC BAA-250 / LMG 18311).